A 586-amino-acid polypeptide reads, in one-letter code: Heterogeneous nuclear ribonucleoprotein L (586 aa).

A compositionally biased stretch (basic residues) spans 1–16 (MSRRLLPRAEKRRRRL). Positions 1–97 (MSRRLLPRAE…NYDDPHKTPA (97 aa)) are disordered. Positions 17-27 (EQRQQPDEQLR) are enriched in basic and acidic residues. Residues 28-37 (RAGAMVKMAA) show a composition bias toward low complexity. The segment covering 38–54 (AGGGGGGGRYYGGGNEG) has biased composition (gly residues). Glycyl lysine isopeptide (Lys-Gly) (interchain with G-Cter in SUMO2) cross-links involve residues Lys59 and Lys62. Positions 69–87 (QHGGGGGGGSGAAGGGGGE) are enriched in gly residues. Ser98 carries the phosphoserine modification. Positions 99-173 (PVVHIRGLID…HPAFVNYSTS (75 aa)) constitute an RRM 1 domain. Lys133 is covalently cross-linked (Glycyl lysine isopeptide (Lys-Gly) (interchain with G-Cter in SUMO2)). Residue Ser182 is modified to Phosphoserine. Positions 190 to 267 (SVLLFTILNP…CTLKIEYAKP (78 aa)) constitute an RRM 2 domain. Lys266 bears the N6-acetyllysine mark. The span at 281 to 298 (DYTNPNLSGQGDPGSNPN) shows a compositional bias: polar residues. A disordered region spans residues 281 to 376 (DYTNPNLSGQ…PPPPDYGPHA (96 aa)). Phosphoserine occurs at positions 288 and 295. Residue Lys299 forms a Glycyl lysine isopeptide (Lys-Gly) (interchain with G-Cter in SUMO2) linkage. Arg351 and Arg355 each carry asymmetric dimethylarginine. Over residues 361–372 (GHPPPPPPPPDY) the composition is skewed to pro residues. Ser378 is subject to Phosphoserine. RRM domains follow at residues 379-476 (PVLM…DFSE) and 492-580 (RIQH…LCFS). Residue Ser541 is modified to Phosphoserine; by CaMK4. A Glycyl lysine isopeptide (Lys-Gly) (interchain with G-Cter in SUMO2) cross-link involves residue Lys565.

As to quaternary structure, identified in a IGF2BP1-dependent mRNP granule complex containing untranslated mRNAs. Interacts with HNRNPLL. Interacts with APEX1; the interaction is DNA-dependent. Component of a complex with SETD2. Interacts with ELAVL1. Part of a transcription inhibitory ribonucleoprotein complex composed at least of the circular RNA circZNF827, ZNF827 and HNRNPK. Interacts with CHD8 in an RNA-dependent manner. In terms of processing, phosphorylation at Ser-541 by CaMK4 enhances interaction with a CaMK4-responsive RNA element (CaRRE1), and prevents inclusion of the stress axis-regulated exon (STREX) of the KCNMA1 potassium channel transcripts upon membrane depolarization. Detected in hematopoietic cells, including lymphoid progenitor cells.

The protein localises to the nucleus. The protein resides in the nucleoplasm. It localises to the cytoplasm. In terms of biological role, splicing factor binding to exonic or intronic sites and acting as either an activator or repressor of exon inclusion. Exhibits a binding preference for CA-rich elements. Component of the heterogeneous nuclear ribonucleoprotein (hnRNP) complexes and associated with most nascent transcripts. Associates, together with APEX1, to the negative calcium responsive element (nCaRE) B2 of the APEX2 promoter. As part of a ribonucleoprotein complex composed at least of ZNF827, HNRNPK and the circular RNA circZNF827 that nucleates the complex on chromatin, may negatively regulate the transcription of genes involved in neuronal differentiation. Regulates alternative splicing of a core group of genes involved in neuronal differentiation, likely by mediating H3K36me3-coupled transcription elongation and co-transcriptional RNA processing via interaction with CHD8. The protein is Heterogeneous nuclear ribonucleoprotein L (Hnrnpl) of Mus musculus (Mouse).